The chain runs to 265 residues: Shikimate dehydrogenase (NADP(+)) (265 aa).

Residues 15-17 (SLS) and Thr62 each bind shikimate. The active-site Proton acceptor is Lys66. The shikimate site is built by Asn87 and Asp102. NADP(+) is bound by residues 125 to 129 (GAGGA), 149 to 154 (NRTLEK), and Leu209. Tyr211 is a binding site for shikimate. Gly233 serves as a coordination point for NADP(+).

It belongs to the shikimate dehydrogenase family. As to quaternary structure, homodimer.

It carries out the reaction shikimate + NADP(+) = 3-dehydroshikimate + NADPH + H(+). Its pathway is metabolic intermediate biosynthesis; chorismate biosynthesis; chorismate from D-erythrose 4-phosphate and phosphoenolpyruvate: step 4/7. Its function is as follows. Involved in the biosynthesis of the chorismate, which leads to the biosynthesis of aromatic amino acids. Catalyzes the reversible NADPH linked reduction of 3-dehydroshikimate (DHSA) to yield shikimate (SA). The polypeptide is Shikimate dehydrogenase (NADP(+)) (Legionella pneumophila (strain Lens)).